The primary structure comprises 1397 residues: Ankyrin repeat domain-containing protein 30A (1397 aa).

6 ANK repeats span residues 72-101, 105-134, 138-167, 171-200, 204-233, and 237-271; these read QKRTALHWACVNGHEEVVTFLVDRKCQLDV, EHRTPLMKALQCHQEACANILIDSGADINL, YGNTALHYAVYSEILSVVAKLLSHGAVIEV, ASLTPLLLSITKRSEQIVEFLLIKNANANA, YKCTALMLAVCHGSSEIVGMLLQQNVDVFA, and CGVTAEHYAVTCGFHHIHEQIMEYIRKLSKNHQNT. Residues 267 to 279 are compositionally biased toward polar residues; the sequence is NHQNTNPEGTSAG. Disordered regions lie at residues 267–376, 453–482, 782–807, and 902–931; these read NHQN…TWPA, PTKESSTKASANDQRFPSESKQEEDEEYSC, QTLRADEILPSESKQKDYEESSWDSE, and TLRADQMFPSESKQKKVEENSWDSESLRET. Basic and acidic residues-rich tracts occupy residues 290 to 304 and 312 to 326; these read RTPDTAESLVEKTPD. The span at 455–467 shows a compositional bias: polar residues; that stretch reads KESSTKASANDQR. Basic and acidic residues-rich tracts occupy residues 782-800 and 913-931; these read QTLRADEILPSESKQKDYE and SKQKKVEENSWDSESLRET. Coiled-coil stretches lie at residues 998–1188 and 1282–1327; these read VLKK…KQDK and EHAQ…FQLQ.

As to expression, mainly expressed in breast and testis. A very faint signal is detected in placenta. Also expressed in many breast cancer cells.

The polypeptide is Ankyrin repeat domain-containing protein 30A (ANKRD30A) (Homo sapiens (Human)).